We begin with the raw amino-acid sequence, 40 residues long: Dihydrolipoyl dehydrogenase (40 aa).

An FAD-binding site is contributed by 36–40; the sequence is EKRGT.

Belongs to the class-I pyridine nucleotide-disulfide oxidoreductase family. In terms of assembly, homodimer. FAD is required as a cofactor.

The protein localises to the mitochondrion matrix. The catalysed reaction is N(6)-[(R)-dihydrolipoyl]-L-lysyl-[protein] + NAD(+) = N(6)-[(R)-lipoyl]-L-lysyl-[protein] + NADH + H(+). In terms of biological role, lipoamide dehydrogenase is a component of the glycine cleavage system as well as of the alpha-ketoacid dehydrogenase complexes. The pyruvate dehydrogenase complex contains multiple copies of three enzymatic components: pyruvate dehydrogenase (E1), dihydrolipoamide acetyltransferase (E2) and lipoamide dehydrogenase (E3). The sequence is that of Dihydrolipoyl dehydrogenase from Solanum tuberosum (Potato).